The chain runs to 2129 residues: Transcription initiation factor TFIID subunit 1 (2129 aa).

Residues 1 to 423 (MEMESDNSDD…VSQLHWEDDV (423 aa)) enclose the Protein kinase 1 domain. Disordered regions lie at residues 77 to 233 (AEPP…DVRE), 246 to 348 (FSRL…PKVA), 377 to 405 (TKAASTSSQPQLKDERRVKSPEDDVEDPS), and 445 to 497 (AGWL…AEAP). Residues 79–88 (PPSDDEEEED) show a composition bias toward acidic residues. Basic and acidic residues-rich tracts occupy residues 110-121 (VKREDGAVKAQD), 159-170 (VEAKLTKDDKEL), and 200-215 (DDSKSTDSKDADRKLD). A compositionally biased stretch (basic residues) spans 263–273 (RHVRKRRRKRN). A compositionally biased stretch (polar residues) spans 280–289 (TTNTGGSDSP). 3 positions are modified to phosphoserine: Ser-286, Ser-288, and Ser-290. Ser-315 is modified (phosphoserine; by autocatalysis). Residues 388–398 (LKDERRVKSPE) show a composition bias toward basic and acidic residues. The span at 470–494 (GSGSSKQGSGASSKKAQQNAQAKPA) shows a compositional bias: low complexity. A Phosphoserine modification is found at Ser-603. Disordered stretches follow at residues 1016-1038 (KPTQTKEEQESQPKRSVTGTDAD), 1149-1208 (LENM…LATN), 1296-1336 (AQNQ…PSRK), 1368-1391 (GMQSSLSQSNPSLADDFDEQSEKE), and 1415-1435 (KRHGGDDGKRRSGSSSGFTLK). Residues 1019 to 1028 (QTKEEQESQP) are compositionally biased toward basic and acidic residues. The span at 1151–1160 (NMLSNKKTST) shows a compositional bias: polar residues. A compositionally biased stretch (basic and acidic residues) spans 1163–1183 (SREREELERQELLRQLDEEHG). A compositionally biased stretch (gly residues) spans 1184 to 1193 (GPSGSGGAKG). Polar residues predominate over residues 1368–1379 (GMQSSLSQSNPS). The Nuclear localization signal motif lies at 1442–1448 (GKKKRRV). Bromo domains are found at residues 1466–1574 (RRRT…LAER) and 1588–1696 (LLDD…LIEF). The Protein kinase 2 domain occupies 1515–2065 (MDLQTMREYI…QHQQMGQAAS (551 aa)). Disordered regions lie at residues 1710-1872 (TQER…LDQG), 1973-1992 (LSHEQDDNGPYNPAEASTSA), 2018-2042 (NNGMGIDDDLDISESDEEDDGSRVR), and 2101-2129 (QHQVMPPMQSEQLQQQQTPQGDNDYAWTF). At Ser-1740 the chain carries Phosphoserine. Residues 1836-1863 (LDEDLQCSTDDEDDDEEEDFQEVSEDEN) are compositionally biased toward acidic residues. Residues 2023–2037 (IDDDLDISESDEEDD) show a composition bias toward acidic residues. Low complexity predominate over residues 2101 to 2120 (QHQVMPPMQSEQLQQQQTPQ).

The protein belongs to the TAF1 family. Belongs to the TFIID complex which is composed of TATA binding protein (Tbp) and a number of TBP-associated factors (Tafs). Taf1 is the largest component of the TFIID complex. Interacts with Tbp, Taf2, Taf4 and Taf6. The cofactor is Mg(2+).

The protein resides in the nucleus. It carries out the reaction L-seryl-[protein] + ATP = O-phospho-L-seryl-[protein] + ADP + H(+). It catalyses the reaction L-threonyl-[protein] + ATP = O-phospho-L-threonyl-[protein] + ADP + H(+). Its activity is regulated as follows. Autophosphorylates on Ser residues. Functionally, TFIID is a multimeric protein complex that plays a central role in mediating promoter responses to various activators and repressors. Largest component and core scaffold of the complex. Contains N- and C-terminal Ser/Thr kinase domains which can autophosphorylate or transphosphorylate other transcription factors. Possesses DNA-binding activity. Essential for progression of the G1 phase of the cell cycle. Negative regulator of the TATA box-binding activity of Tbp. The chain is Transcription initiation factor TFIID subunit 1 (Taf1) from Drosophila melanogaster (Fruit fly).